We begin with the raw amino-acid sequence, 179 residues long: Large ribosomal subunit protein uL10 (179 aa).

Belongs to the universal ribosomal protein uL10 family. As to quaternary structure, part of the ribosomal stalk of the 50S ribosomal subunit. The N-terminus interacts with L11 and the large rRNA to form the base of the stalk. The C-terminus forms an elongated spine to which L12 dimers bind in a sequential fashion forming a multimeric L10(L12)X complex.

Forms part of the ribosomal stalk, playing a central role in the interaction of the ribosome with GTP-bound translation factors. The polypeptide is Large ribosomal subunit protein uL10 (Mycolicibacterium gilvum (strain PYR-GCK) (Mycobacterium gilvum (strain PYR-GCK))).